Reading from the N-terminus, the 170-residue chain is Peptide deformylase (170 aa).

Fe cation-binding residues include cysteine 91 and histidine 133. Residue glutamate 134 is part of the active site. Histidine 137 provides a ligand contact to Fe cation.

This sequence belongs to the polypeptide deformylase family. Fe(2+) is required as a cofactor.

The enzyme catalyses N-terminal N-formyl-L-methionyl-[peptide] + H2O = N-terminal L-methionyl-[peptide] + formate. Functionally, removes the formyl group from the N-terminal Met of newly synthesized proteins. Requires at least a dipeptide for an efficient rate of reaction. N-terminal L-methionine is a prerequisite for activity but the enzyme has broad specificity at other positions. This chain is Peptide deformylase, found in Histophilus somni (strain 129Pt) (Haemophilus somnus).